A 267-amino-acid polypeptide reads, in one-letter code: MEMO1 family protein aq_890 (267 aa).

The protein belongs to the MEMO1 family.

In Aquifex aeolicus (strain VF5), this protein is MEMO1 family protein aq_890.